Consider the following 642-residue polypeptide: Threonine--tRNA ligase (642 aa).

Residues 1 to 61 (MPVITLPDGS…ENDTQLSIIT (61 aa)) enclose the TGS domain. The tract at residues 243-534 (DHRKIGKQLD…LTEEFAGFFP (292 aa)) is catalytic. The residue at position 286 (Lys286) is an N6-acetyllysine. Zn(2+)-binding residues include Cys334, His385, and His511.

This sequence belongs to the class-II aminoacyl-tRNA synthetase family. In terms of assembly, homodimer. Zn(2+) serves as cofactor.

The protein localises to the cytoplasm. It catalyses the reaction tRNA(Thr) + L-threonine + ATP = L-threonyl-tRNA(Thr) + AMP + diphosphate + H(+). In terms of biological role, catalyzes the attachment of threonine to tRNA(Thr) in a two-step reaction: L-threonine is first activated by ATP to form Thr-AMP and then transferred to the acceptor end of tRNA(Thr). Also edits incorrectly charged L-seryl-tRNA(Thr). The protein is Threonine--tRNA ligase of Shigella dysenteriae serotype 1 (strain Sd197).